A 261-amino-acid chain; its full sequence is MVELRLPSNSVVKKGREHKAQQKMLKPRKVKVYRYDPDLDENPTIDSFEIDLSKTGPMVLDALIKIKNEIDSTLTFRRSCREGICGSCAMNIDGTNTLACIKPIEDISGDIKIYPLPHMKVVKDLVPDMSHFYAQYESIEPWLKNDSPAPSNSERLQSIKDREKLDGLYECILCACCSTSCPSYWWNGDKYLGPAILLQAYRWIADSRDDNTGARLEALEDPFKLYRCHTIMNCTKTCPKGLNPAKAIGRVKNLIAERHGV.

The 2Fe-2S ferredoxin-type domain maps to 28–119 (RKVKVYRYDP…DIKIYPLPHM (92 aa)). [2Fe-2S] cluster contacts are provided by Cys-80, Cys-85, and Cys-100. In terms of domain architecture, 4Fe-4S ferredoxin-type spans 161-191 (DREKLDGLYECILCACCSTSCPSYWWNGDKY). [4Fe-4S] cluster-binding residues include Cys-171, Cys-174, and Cys-177. Cys-181 is a [3Fe-4S] cluster binding site. Position 186 (Trp-186) interacts with a ubiquinone. [3Fe-4S] cluster is bound by residues Cys-228 and Cys-234. Cys-238 serves as a coordination point for [4Fe-4S] cluster.

This sequence belongs to the succinate dehydrogenase/fumarate reductase iron-sulfur protein family. As to quaternary structure, part of an enzyme complex containing four subunits: a flavoprotein, an iron-sulfur, cytochrome b-556, and a hydrophobic anchor protein. It depends on [2Fe-2S] cluster as a cofactor. The cofactor is [3Fe-4S] cluster. Requires [4Fe-4S] cluster as cofactor.

The catalysed reaction is a quinone + succinate = fumarate + a quinol. It functions in the pathway carbohydrate metabolism; tricarboxylic acid cycle; fumarate from succinate (bacterial route): step 1/1. The chain is Succinate dehydrogenase iron-sulfur subunit (sdhB) from Rickettsia prowazekii (strain Madrid E).